Reading from the N-terminus, the 146-residue chain is Mu-like prophage FluMu G protein 1 (146 aa).

The protein to phage Mu protein G.

The protein is Mu-like prophage FluMu G protein 1 of Haemophilus influenzae (strain ATCC 51907 / DSM 11121 / KW20 / Rd).